Reading from the N-terminus, the 221-residue chain is Cytidylate kinase (221 aa).

7–15 (GPSASGKSS) provides a ligand contact to ATP.

The protein belongs to the cytidylate kinase family. Type 1 subfamily.

It is found in the cytoplasm. The catalysed reaction is CMP + ATP = CDP + ADP. It carries out the reaction dCMP + ATP = dCDP + ADP. This is Cytidylate kinase from Borreliella burgdorferi (strain ZS7) (Borrelia burgdorferi).